Reading from the N-terminus, the 143-residue chain is Hemoglobin subunit alpha (143 aa).

The Globin domain maps to 2–143 (VLSPADKTNV…VSTVLVSKYR (142 aa)). The residue at position 4 (Ser4) is a Phosphoserine. Lys8 is subject to N6-succinyllysine. At Thr9 the chain carries Phosphothreonine. Lys12 carries the post-translational modification N6-succinyllysine. At Lys17 the chain carries N6-acetyllysine; alternate. At Lys17 the chain carries N6-succinyllysine; alternate. Residue Tyr25 is modified to Phosphotyrosine. Ser36 is modified (phosphoserine). Lys41 is modified (N6-succinyllysine). Ser51 is subject to Phosphoserine. Position 60 (His60) interacts with O2. His89 is a heme b binding site. Ser104 is modified (phosphoserine). Residue Thr110 is modified to Phosphothreonine. Phosphoserine is present on Ser126. Thr136 carries the phosphothreonine modification. Ser140 is modified (phosphoserine).

This sequence belongs to the globin family. As to quaternary structure, heterotetramer of two alpha chains and two beta chains. As to expression, red blood cells.

Functionally, involved in oxygen transport from the lung to the various peripheral tissues. In terms of biological role, hemopressin acts as an antagonist peptide of the cannabinoid receptor CNR1. Hemopressin-binding efficiently blocks cannabinoid receptor CNR1 and subsequent signaling. The sequence is that of Hemoglobin subunit alpha (HBA) from Pipistrellus abramus (Japanese pipistrelle).